The following is a 527-amino-acid chain: Zinc finger CCCH-type with G patch domain-containing protein (527 aa).

The disordered stretch occupies residues 97–126 (GEVSGSSSDMREREDEREEEDDGEVEGEVD). Over residues 111–125 (DEREEEDDGEVEGEV) the composition is skewed to acidic residues. Residues 173 to 200 (QKSMKPCPFFLEDKCRFADNCRFSHGEV) form a C3H1-type zinc finger. The segment at 268-312 (LREDDLPSCSDSEDDDNGEGEAAFPRVLTQEEDWAPSRSSSAFGG) is disordered. The region spanning 317–363 (TRGIGSKLMLKMGYEYGKGLGKTSEGRVEPVLAVVLPKGKSLDQCAE) is the G-patch domain. Disordered regions lie at residues 369–396 (TQRK…AHNT), 410–444 (LGNG…YKGG), and 505–527 (KAQE…MTEF). Basic residues predominate over residues 384-393 (RNKRTRKARA). Residues 511–527 (AQRENRKADTHKKMTEF) are compositionally biased toward basic and acidic residues.

The protein localises to the nucleus. Its function is as follows. Transcription repressor that specifically binds the 5'-GGAG[GA]A[GA]A-3' consensus sequence. Represses transcription by recruiting the chromatin multiprotein complex NuRD to target promoters. Negatively regulates expression of EGFR, a gene involved in cell proliferation, survival and migration. In Salmo salar (Atlantic salmon), this protein is Zinc finger CCCH-type with G patch domain-containing protein (zgpat).